The primary structure comprises 66 residues: Small ribosomal subunit protein bS21 (66 aa).

The protein belongs to the bacterial ribosomal protein bS21 family.

This is Small ribosomal subunit protein bS21 from Rickettsia felis (strain ATCC VR-1525 / URRWXCal2) (Rickettsia azadi).